Reading from the N-terminus, the 586-residue chain is Serine/threonine-protein phosphatase 2A 56 kDa regulatory subunit delta isoform (586 aa).

A disordered region spans residues Met1–Lys80. 6 repeat units span residues Gln21–Pro22, Gln23–Pro24, Gln25–Pro26, Gln27–Pro28, Gln29–Pro30, and Gln31–Pro32. The segment at Gln21 to Pro36 is 8 X 2 AA approximate tandem repeats of Q-P. Over residues Gln23–Gln35 the composition is skewed to pro residues. The 7; approximate repeat unit spans residues Gln33 to Ser34. Copy 8 of the repeat occupies Gln35–Pro36. Low complexity predominate over residues Pro36 to Asn45. Residue Thr47 is modified to Phosphothreonine. 3 positions are modified to phosphoserine: Ser72, Ser73, and Ser74. Positions Arg507–Pro514 match the SH3-binding; class I motif. A Nuclear localization signal motif is present at residues Lys532–Glu549. A phosphoserine mark is found at Ser557 and Ser582.

It belongs to the phosphatase 2A regulatory subunit B56 family. As to quaternary structure, PP2A consists of a common heterodimeric core enzyme, composed of a 36 kDa catalytic subunit (subunit C) and a 65 kDa constant regulatory subunit (PR65 or subunit A), that associates with a variety of regulatory subunits. Proteins that associate with the core dimer include three families of regulatory subunits B (the R2/B/PR55/B55, R3/B''/PR72/PR130/PR59 and R5/B'/B56 families), the 48 kDa variable regulatory subunit, viral proteins, and cell signaling molecules. Interacts with the PP2A A subunit PPP2R1A. Interacts with SGO1. Interacts with ADCY8. Highly expressed in brain.

Its subcellular location is the nucleus. The B regulatory subunit might modulate substrate selectivity and catalytic activity, and might also direct the localization of the catalytic enzyme to a particular subcellular compartment. The chain is Serine/threonine-protein phosphatase 2A 56 kDa regulatory subunit delta isoform (PPP2R5D) from Oryctolagus cuniculus (Rabbit).